The primary structure comprises 134 residues: Thrombin inhibitor savignin (134 aa).

Positions 1–16 (MLFYVVITLVAGTVSG) are cleaved as a signal peptide. The BPTI/Kunitz inhibitor 1 domain occupies 17 to 69 (LNVRCNNPHTANCENGAKLESYFREGETCVGSPACPGEGYATKEDCQKACFPG). 6 disulfides stabilise this stretch: C21–C66, C29–C51, C45–C62, C81–C129, C89–C112, and C105–C125. Positions 70 to 82 (GGDHSTNVDSSCF) are linker. Residues 83 to 129 (GQPPTSCETGAEVTYYDSGSRTCKVLQHGCPSSENAFDSEIECQVAC) enclose the BPTI/Kunitz inhibitor domain.

As to expression, expressed in salivary glands.

The protein resides in the cytoplasmic vesicle. The protein localises to the secretory vesicle. It localises to the secreted. Functionally, tick salivary thrombin inhibitor that plays an important part in the anti-hemostatic strategy of ticks. Inhibits thrombin-induced platelet aggregation, but has no effect on ADP- or collagen-induced aggregation. Is a competitive, slow-, tight-binding inhibitor of thrombin (Ki=4.89 pM). It requires thrombin fibrinogen-binding exosite for optimal inhibition, as its affinity for thrombin lacking the exosite is much lower (Ki=22.3 nM). Its N-terminal amino acid residues may bind inside the active site cleft of thrombin, while its C-terminal domain may interact with the basic fibrinogen recognition exosite of thrombin. It does not inhibit plasmin, factor Xa (F10), and trypsin. This chain is Thrombin inhibitor savignin, found in Ornithodoros kalahariensis (Tick).